A 448-amino-acid polypeptide reads, in one-letter code: Phosphoglucosamine mutase (448 aa).

The active-site Phosphoserine intermediate is the Ser-100. Positions 100, 240, 242, and 244 each coordinate Mg(2+). Ser-100 carries the phosphoserine modification.

This sequence belongs to the phosphohexose mutase family. Mg(2+) serves as cofactor. In terms of processing, activated by phosphorylation.

It catalyses the reaction alpha-D-glucosamine 1-phosphate = D-glucosamine 6-phosphate. In terms of biological role, catalyzes the conversion of glucosamine-6-phosphate to glucosamine-1-phosphate. This is Phosphoglucosamine mutase from Bacillus cytotoxicus (strain DSM 22905 / CIP 110041 / 391-98 / NVH 391-98).